Reading from the N-terminus, the 325-residue chain is Probable pectate lyase B (325 aa).

A signal peptide spans 1–15 (MRLPTLFMLAAIATA). Residues D132, D161, and D165 each contribute to the Ca(2+) site. R218 is an active-site residue.

The protein belongs to the polysaccharide lyase 1 family. The cofactor is Ca(2+).

It is found in the secreted. The catalysed reaction is Eliminative cleavage of (1-&gt;4)-alpha-D-galacturonan to give oligosaccharides with 4-deoxy-alpha-D-galact-4-enuronosyl groups at their non-reducing ends.. In terms of biological role, pectinolytic enzyme consist of four classes of enzymes: pectin lyase, polygalacturonase, pectin methylesterase and rhamnogalacturonase. Among pectinolytic enzymes, pectin lyase is the most important in depolymerization of pectin, since it cleaves internal glycosidic bonds of highly methylated pectins. Favors pectate, the anion, over pectin, the methyl ester. In Aspergillus terreus (strain NIH 2624 / FGSC A1156), this protein is Probable pectate lyase B (plyB).